Here is a 409-residue protein sequence, read N- to C-terminus: Coagulation factor IX (409 aa).

Positions 1, 2, 7, 8, 16, 18, 21, 22, 27, 28, and 31 each coordinate Ca(2+). Residues 1 to 47 form the Gla domain; that stretch reads YNSGKLEESFVRGNLERECIEEKCSFEEAREVFENTEKTNEFWKQYV. A 4-carboxyglutamate mark is found at glutamate 7, glutamate 8, glutamate 16, glutamate 18, glutamate 21, glutamate 22, glutamate 27, glutamate 28, glutamate 31, glutamate 34, glutamate 37, and glutamate 41. Glutamate 16 is a binding site for Mg(2+). A disulfide bond links cysteine 19 and cysteine 24. Mg(2+) is bound at residue glutamate 21. Glutamate 27 contributes to the Mg(2+) binding site. Glutamate 31 is a Mg(2+) binding site. Ca(2+)-binding residues include glutamate 37, glutamate 41, aspartate 48, glycine 49, and glutamine 51. Mg(2+)-binding residues include glutamate 37 and glutamate 41. One can recognise an EGF-like 1; calcium-binding domain in the interval 48-84; sequence DGDQCEPNPCLNGGLCKDDINSYECWCQVGFEGKNCE. Cystine bridges form between cysteine 52–cysteine 63, cysteine 57–cysteine 72, cysteine 74–cysteine 83, cysteine 89–cysteine 100, cysteine 96–cysteine 110, cysteine 112–cysteine 125, cysteine 133–cysteine 291, cysteine 208–cysteine 224, cysteine 338–cysteine 352, and cysteine 363–cysteine 391. Residues aspartate 65 and aspartate 66 each coordinate Ca(2+). Residue aspartate 65 is modified to (3R)-3-hydroxyaspartate. Serine 69 is modified (phosphoserine). The region spanning 85–126 is the EGF-like 2 domain; it reads LDATCNIKNGRCKQFCKTGADSKVLCSCTTGYRLAPDQKSCK. Residues 148–182 constitute a propeptide, activation peptide; that stretch reads AEIIFSNMDYENSTEVEPILDSLTESNQSSDDFIR. The residue at position 157 (tyrosine 157) is a Sulfotyrosine. Serine 160 carries the post-translational modification Phosphoserine. A Phosphothreonine; alternate modification is found at threonine 161. An O-linked (GalNAc...) threonine; alternate glycan is attached at threonine 161. Residue threonine 171 is glycosylated (O-linked (GalNAc...) threonine). The N-linked (GlcNAc...) asparagine glycan is linked to asparagine 174. One can recognise a Peptidase S1 domain in the interval 183–409; that stretch reads IVGGENAKPG…YTKVSRYVNW (227 aa). Histidine 223 functions as the Charge relay system in the catalytic mechanism. Residues glutamate 237, asparagine 239, glutamate 242, glutamate 244, and glutamate 247 each coordinate Ca(2+). Asparagine 262 is a glycosylation site (N-linked (GlcNAc...) asparagine). The active-site Charge relay system is aspartate 271. The Charge relay system role is filled by serine 367.

This sequence belongs to the peptidase S1 family. As to quaternary structure, heterodimer of a light chain and a heavy chain; disulfide-linked. Interacts (inactive and activated) with F11 (activated) in calcium-dependent manner. Interacts with SERPINC1. Post-translationally, activated by factor XIa, which excises the activation peptide. The propeptide can also be removed by snake venom protease. Activated by coagulation factor VIIa-tissue factor (F7-F3) complex in calcium-dependent manner. The iron and 2-oxoglutarate dependent 3-hydroxylation of aspartate and asparagine is (R) stereospecific within EGF domains.

The protein resides in the secreted. It carries out the reaction Selective cleavage of Arg-|-Ile bond in factor X to form factor Xa.. In terms of biological role, factor IX is a vitamin K-dependent plasma protein that participates in the intrinsic pathway of blood coagulation by converting factor X to its active form in the presence of Ca(2+) ions, phospholipids, and factor VIIIa. This Sus scrofa (Pig) protein is Coagulation factor IX (F9).